The sequence spans 747 residues: WD repeat-containing protein 91 (747 aa).

Positions 183–227 (QRTNQVQEENEVLRQKLFALQAEVHRLKKEEQQQEEAAALVQHKL) form a coiled coil. Phosphoserine is present on Ser256. Low complexity predominate over residues 265–278 (LLPQSKKSPSRLSP). The tract at residues 265 to 358 (LLPQSKKSPS…SQTQCAEKKL (94 aa)) is disordered. The segment covering 283 to 299 (PQAQSSAKKDTFSSQAT) has biased composition (polar residues). A Phosphoserine modification is found at Ser288. Residues 332–343 (RLQDHGKERREL) show a composition bias toward basic and acidic residues. Polar residues predominate over residues 344-353 (LSTSSSQTQC). WD repeat units lie at residues 406-445 (EHHSSIMHCRVDCSGRRVASLDVDGVIKVWSFNPIMQTKA), 448-488 (ISKS…NLCE), 511-555 (VCSA…QQLQ), 560-599 (PEPIAINCTAFNHNGNLLVTGAADGVIRLFDMQQHGCAMS), 602-641 (AHCGEVYSVEFSYDENAVNSIGEDGKFIQWNIHKSGLKVS), 664-702 (VQVPRGRLFAFDSEGNYMLTCSATGGLIYKLGSEEKVLE), and 709-747 (GHRAPVVTVDWSTAMDCGTCLTASMDGKIKLTTLLAHKL).

Belongs to the WD repeat WDR91 family. As to quaternary structure, interacts with WDR81; involved in early to late endosome cargo transport. Interacts with BECN1; negatively regulates the PI3 kinase/PI3K activity associated with endosomal membranes.

The protein resides in the early endosome membrane. The protein localises to the late endosome membrane. Functions as a negative regulator of the PI3 kinase/PI3K activity associated with endosomal membranes via BECN1, a core subunit of the PI3K complex. By modifying the phosphatidylinositol 3-phosphate/PtdInsP3 content of endosomal membranes may regulate endosome fusion, recycling, sorting and early to late endosome transport. It is for instance, required for the delivery of cargos like BST2/tetherin from early to late endosome and thereby participates indirectly to their degradation by the lysosome. May play a role in meiosis. The protein is WD repeat-containing protein 91 of Rattus norvegicus (Rat).